Consider the following 760-residue polypeptide: 5-methyltetrahydropteroyltriglutamate--homocysteine methyltransferase (760 aa).

5-methyltetrahydropteroyltri-L-glutamate contacts are provided by residues 17–20 (RELK) and Lys-118. Residues 436 to 438 (IGS) and Glu-489 each bind L-homocysteine. L-methionine contacts are provided by residues 436-438 (IGS) and Glu-489. 5-methyltetrahydropteroyltri-L-glutamate contacts are provided by residues 520 to 521 (RC) and Trp-566. Asp-604 provides a ligand contact to L-homocysteine. Asp-604 contributes to the L-methionine binding site. Residue Glu-610 participates in 5-methyltetrahydropteroyltri-L-glutamate binding. Zn(2+)-binding residues include His-646, Cys-648, and Glu-670. The active-site Proton donor is His-699. Cys-731 contributes to the Zn(2+) binding site.

Belongs to the vitamin-B12 independent methionine synthase family. The cofactor is Zn(2+).

It catalyses the reaction 5-methyltetrahydropteroyltri-L-glutamate + L-homocysteine = tetrahydropteroyltri-L-glutamate + L-methionine. Its pathway is amino-acid biosynthesis; L-methionine biosynthesis via de novo pathway; L-methionine from L-homocysteine (MetE route): step 1/1. Functionally, catalyzes the transfer of a methyl group from 5-methyltetrahydrofolate to homocysteine resulting in methionine formation. The polypeptide is 5-methyltetrahydropteroyltriglutamate--homocysteine methyltransferase (Vibrio parahaemolyticus serotype O3:K6 (strain RIMD 2210633)).